A 341-amino-acid chain; its full sequence is L-threonine 3-dehydrogenase (341 aa).

A Zn(2+)-binding site is contributed by Cys38. Active-site charge relay system residues include Thr40 and His43. Zn(2+) contacts are provided by His63, Glu64, Cys93, Cys96, Cys99, and Cys107. NAD(+) is bound by residues Ile175, Asp195, Arg200, 262–264 (LGI), and 286–287 (IY).

Belongs to the zinc-containing alcohol dehydrogenase family. Homotetramer. The cofactor is Zn(2+).

It localises to the cytoplasm. The catalysed reaction is L-threonine + NAD(+) = (2S)-2-amino-3-oxobutanoate + NADH + H(+). It functions in the pathway amino-acid degradation; L-threonine degradation via oxydo-reductase pathway; glycine from L-threonine: step 1/2. In terms of biological role, catalyzes the NAD(+)-dependent oxidation of L-threonine to 2-amino-3-ketobutyrate. The chain is L-threonine 3-dehydrogenase from Serratia proteamaculans (strain 568).